Consider the following 251-residue polypeptide: Hydroxyacylglutathione hydrolase (251 aa).

Zn(2+)-binding residues include H53, H55, D57, H58, H110, D127, and H165.

Belongs to the metallo-beta-lactamase superfamily. Glyoxalase II family. In terms of assembly, monomer. It depends on Zn(2+) as a cofactor.

The catalysed reaction is an S-(2-hydroxyacyl)glutathione + H2O = a 2-hydroxy carboxylate + glutathione + H(+). It functions in the pathway secondary metabolite metabolism; methylglyoxal degradation; (R)-lactate from methylglyoxal: step 2/2. In terms of biological role, thiolesterase that catalyzes the hydrolysis of S-D-lactoyl-glutathione to form glutathione and D-lactic acid. This chain is Hydroxyacylglutathione hydrolase, found in Escherichia coli O17:K52:H18 (strain UMN026 / ExPEC).